Here is a 316-residue protein sequence, read N- to C-terminus: Protoheme IX farnesyltransferase (316 aa).

A disordered region spans residues 1 to 21; that stretch reads MAKSQALGNAPLTSTVAENAT. Over residues 11–21 the composition is skewed to polar residues; the sequence is PLTSTVAENAT. 9 consecutive transmembrane segments (helical) span residues 42–62, 67–87, 115–135, 136–156, 163–183, 189–209, 235–255, 256–276, and 295–315; these read VVAM…PGIP, VILG…FNHV, VVFA…LNAL, TAWL…VWLK, IVIG…AVTG, ALLL…ALAI, MVLL…LTGM, SGGV…GYAL, and IWHL…TSLM.

Belongs to the UbiA prenyltransferase family. Protoheme IX farnesyltransferase subfamily.

Its subcellular location is the cell inner membrane. The enzyme catalyses heme b + (2E,6E)-farnesyl diphosphate + H2O = Fe(II)-heme o + diphosphate. It participates in porphyrin-containing compound metabolism; heme O biosynthesis; heme O from protoheme: step 1/1. Converts heme B (protoheme IX) to heme O by substitution of the vinyl group on carbon 2 of heme B porphyrin ring with a hydroxyethyl farnesyl side group. This is Protoheme IX farnesyltransferase from Photobacterium profundum (strain SS9).